Consider the following 501-residue polypeptide: Aldehyde dehydrogenase family 2 member C4 (501 aa).

245-250 (GSTDVG) provides a ligand contact to NAD(+). Catalysis depends on E268, which acts as the Proton acceptor. The Nucleophile role is filled by C302.

Belongs to the aldehyde dehydrogenase family. In terms of assembly, homotetramer.

The protein localises to the cytoplasm. It localises to the cytosol. It catalyses the reaction an aldehyde + NAD(+) + H2O = a carboxylate + NADH + 2 H(+). In terms of biological role, involved in ferulic acid and sinapic acid biosynthesis by oxidation of conyferylaldehyde and sinapaldehyde, respectively. Can oxidize L-lactaldehyde. Possesses activity on acetaldehyde and glycolaldehyde in vitro. This chain is Aldehyde dehydrogenase family 2 member C4 (ALDH2C4), found in Arabidopsis thaliana (Mouse-ear cress).